A 113-amino-acid polypeptide reads, in one-letter code: Iron-sulfur cluster insertion protein ErpA (113 aa).

The iron-sulfur cluster site is built by cysteine 41, cysteine 105, and cysteine 107.

The protein belongs to the HesB/IscA family. As to quaternary structure, homodimer. Iron-sulfur cluster is required as a cofactor.

In terms of biological role, required for insertion of 4Fe-4S clusters for at least IspG. This chain is Iron-sulfur cluster insertion protein ErpA, found in Aliivibrio salmonicida (strain LFI1238) (Vibrio salmonicida (strain LFI1238)).